Here is a 428-residue protein sequence, read N- to C-terminus: E3 ubiquitin-protein ligase RNF128 (428 aa).

A signal peptide spans 1–38 (MGPPPGIGVYCRGGCGAARLLAWCFLLALSPHAPGSRG). N-linked (GlcNAc...) asparagine glycosylation is found at asparagine 48, asparagine 59, and asparagine 101. The PA domain occupies 75–183 (SPLEPVSGVL…LKGTKILQSI (109 aa)). A helical membrane pass occupies residues 208–228 (IFFVSVSFFIITAATVGYFIF). An RING-type; atypical zinc finger spans residues 277 to 318 (CAVCIELYKPNDLVRILTCNHIFHKTCVDPWLLEHRTCPMCK). Positions 342 to 351 (VSNEASNTAS) are enriched in polar residues. Positions 342-428 (VSNEASNTAS…QEAAVREIKS (87 aa)) are disordered.

In terms of processing, auto-ubiquitinated. Controls the development of T-cell clonal anergy by ubiquitination. Expressed in brain, kidney, heart, liver, ovary, testis and thymus. Expression increased as early as 4 hours by 5- to 7-fold in anergized cultures as compared to resting or activated cells.

It localises to the cytoplasm. Its subcellular location is the endomembrane system. The protein resides in the cytoskeleton. It is found in the perinuclear region. It catalyses the reaction S-ubiquitinyl-[E2 ubiquitin-conjugating enzyme]-L-cysteine + [acceptor protein]-L-lysine = [E2 ubiquitin-conjugating enzyme]-L-cysteine + N(6)-ubiquitinyl-[acceptor protein]-L-lysine.. The protein operates within protein modification; protein ubiquitination. Functionally, E3 ubiquitin-protein ligase that catalyzes 'Lys-27', 'Lys-48'- or 'Lys-63'-linked polyubiquitin chains formation and plays a role in different biological processes such as modulation of immune response, cytoskeletal dynamics or protein homeostasis. Inhibits IL2 and IL4 transcription, thereby playing an important role in the induction of the anergic phenotype, a long-term stable state of T-lymphocyte unresponsiveness to antigenic stimulation associated with the blockade of interleukin production. Ubiquitinates ARPC5 with 'Lys-48' linkages and COR1A with 'Lys-63' linkages leading to their degradation, down-regulation of these cytoskeletal components results in impaired lamellipodium formation and reduced accumulation of F-actin at the immunological synapse. Functions in the patterning of the dorsal ectoderm; sensitizes ectoderm to respond to neural-inducing signals. Plays a positive role in innate immune response by promoting 'Lys-63'-linked ubiquitination of TBK1 after RNA- or DNA-virus infection. Regulates alveolar macrophage activation and neutrophil infiltration by interacting with TLR4, targeting it for degradation, and inhibiting NF-kappa-B activation, hence decreasing pro-inflammatory cytokines. Negatively regulates the IL-3/STAT5 signaling pathway by facilitating 'Lys-27'-linked polyubiquitination of IL3RA leading to its degradation via lysosomal pathway. Directly regulates the N-glycosylation process in the endoplasmic reticulum by targeting the glycosyl-transferase RPN1 for ubiquitination and degradation. Other substrates targeted for degradation by RNF128 include transmembrane proteins CD40L, CD83 or the tetraspanin CD151. The protein is E3 ubiquitin-protein ligase RNF128 (Rnf128) of Mus musculus (Mouse).